The chain runs to 152 residues: Ribosome maturation factor RimP (152 aa).

This sequence belongs to the RimP family.

Its subcellular location is the cytoplasm. Required for maturation of 30S ribosomal subunits. The chain is Ribosome maturation factor RimP from Escherichia coli (strain K12 / MC4100 / BW2952).